We begin with the raw amino-acid sequence, 551 residues long: Methyl-accepting chemotaxis protein I (551 aa).

The Cytoplasmic segment spans residues 1–6; the sequence is MLKRIK. A helical membrane pass occupies residues 7–30; that stretch reads IVTSLLLVLAVFGLLQLTSGGLFF. Topologically, residues 31 to 190 are periplasmic; the sequence is NALKNDKENF…AVSDNNASYS (160 aa). The the 3 Arg may form a positively charged pocket, which binds the alpha-carboxyl group of the attractant AA stretch occupies residues 64–73; it reads RNTLNRAGIR. Residues 191–210 traverse the membrane as a helical segment; that stretch reads QAMWILVGVMIVVLAVIFAV. Residues 211-551 lie on the Cytoplasmic side of the membrane; that stretch reads WFGIKASLVA…ADSEENWETF (341 aa). The HAMP domain maps to 216–268; sequence ASLVAPMNRLIDSIRHIAGGDLVKPIEVDGSNEMGQLAESLRHMQGELMRTVG. Positions 273 to 502 constitute a Methyl-accepting transducer domain; the sequence is GANAIYSGAS…ESAAAAAALE (230 aa). Gln297 is modified (glutamate methyl ester (Gln)). Glu304 is modified (glutamate methyl ester (Glu)). At Gln311 the chain carries Glutamate methyl ester (Gln). A glutamate methyl ester (Glu) mark is found at Glu493 and Glu502.

This sequence belongs to the methyl-accepting chemotaxis (MCP) protein family.

Its subcellular location is the cell inner membrane. Functionally, receptor for the attractant L-serine and related amino acids. Is also responsible for chemotaxis away from a wide range of repellents, including leucine, indole, and weak acids. Chemotactic-signal transducers respond to changes in the concentration of attractants and repellents in the environment, transduce a signal from the outside to the inside of the cell, and facilitate sensory adaptation through the variation of the level of methylation. Attractants increase the level of methylation while repellents decrease the level of methylation, the methyl groups are added by the methyltransferase CheR and removed by the methylesterase CheB. In Escherichia coli (strain K12), this protein is Methyl-accepting chemotaxis protein I (tsr).